Consider the following 1490-residue polypeptide: DNA-directed RNA polymerase subunit beta' (1490 aa).

Zn(2+)-binding residues include C67, C69, C82, and C85. Mg(2+) is bound by residues D499, D501, and D503. Zn(2+) contacts are provided by C868, C944, C951, and C954.

Belongs to the RNA polymerase beta' chain family. In terms of assembly, the RNAP catalytic core consists of 2 alpha, 1 beta, 1 beta' and 1 omega subunit. When a sigma factor is associated with the core the holoenzyme is formed, which can initiate transcription. Requires Mg(2+) as cofactor. Zn(2+) is required as a cofactor.

The enzyme catalyses RNA(n) + a ribonucleoside 5'-triphosphate = RNA(n+1) + diphosphate. DNA-dependent RNA polymerase catalyzes the transcription of DNA into RNA using the four ribonucleoside triphosphates as substrates. The sequence is that of DNA-directed RNA polymerase subunit beta' from Chlorobaculum tepidum (strain ATCC 49652 / DSM 12025 / NBRC 103806 / TLS) (Chlorobium tepidum).